A 191-amino-acid polypeptide reads, in one-letter code: Protein DMP10 (191 aa).

4 helical membrane passes run 15 to 35 (FANLLPTGTALIFETLLPSFS), 48 to 68 (LLTITLISFCAAACFFSSFTD), 114 to 134 (LSFVDFVHAFVSVIVFLALAV), and 158 to 178 (LMIKYFAVMVLTMASFFFAIF).

This sequence belongs to the plant DMP1 protein family. In terms of tissue distribution, restricted to flowers.

Its subcellular location is the membrane. Its function is as follows. Involved in membrane remodeling. This is Protein DMP10 from Arabidopsis thaliana (Mouse-ear cress).